The primary structure comprises 445 residues: Nuclear envelope integral membrane protein 1 (445 aa).

A signal peptide spans 1 to 44 (MAGGMKVAVLPAVGAGPWSWGAGGCGAVRLLLVLFGCFVCGSAG). Asn125 carries an N-linked (GlcNAc...) asparagine glycan. 5 helical membrane-spanning segments follow: residues 161 to 181 (PKLF…DLLS), 186 to 206 (FYYS…IIFI), 216 to 236 (PIYI…QLVF), 245 to 265 (CYWQ…FAVC), and 289 to 309 (LCFM…VVIA). The a; required for its colocalization with lamins at the nuclear envelope stretch occupies residues 186-297 (FYYSTGMSVG…GLCFMYSSIQ (112 aa)). The interval 336 to 405 (TVPPRLLTEE…LTPNEVSVHE (70 aa)) is b; required for interaction with RAN-GTP. Residues 336 to 445 (TVPPRLLTEE…LVVQQNSFLT (110 aa)) are required for nuclear localization. Phosphoserine is present on residues Ser368, Ser424, and Ser425. Over residues 418–430 (ELSEETSSEEEDS) the composition is skewed to acidic residues. Positions 418–445 (ELSEETSSEEEDSDSRYPLVVQQNSFLT) are disordered.

This sequence belongs to the NEMP family. As to quaternary structure, homooligomer. Interacts with RAN-GTP. Interacts with EMD. In terms of processing, phosphorylation may regulate its interaction with RAN-GTP.

It localises to the nucleus inner membrane. It is found in the nucleus envelope. In terms of biological role, together with EMD, contributes to nuclear envelope stiffness in germ cells. Required for female fertility. Essential for normal erythropoiesis. Required for efficient nuclear envelope opening and enucleation during the late stages of erythroblast maturation. The sequence is that of Nuclear envelope integral membrane protein 1 (NEMP1) from Bos taurus (Bovine).